The primary structure comprises 93 residues: MPRSLKKGPFIDDHLIKKVELAVSNSDRRVIKTWSRRSTIAPEMVGLTFAVHNGKKFIPVFVTENMVGHKLGEFAPTRTFYGHAADKKSKAKK.

Belongs to the universal ribosomal protein uS19 family.

In terms of biological role, protein S19 forms a complex with S13 that binds strongly to the 16S ribosomal RNA. The polypeptide is Small ribosomal subunit protein uS19 (Nitratidesulfovibrio vulgaris (strain DSM 19637 / Miyazaki F) (Desulfovibrio vulgaris)).